A 228-amino-acid chain; its full sequence is Ribose-5-phosphate isomerase A (228 aa).

Substrate-binding positions include 26–29, 81–84, and 94–97; these read SGST, DGAD, and KGGG. Catalysis depends on Glu-103, which acts as the Proton acceptor. Lys-121 serves as a coordination point for substrate.

It belongs to the ribose 5-phosphate isomerase family. As to quaternary structure, homodimer.

It catalyses the reaction aldehydo-D-ribose 5-phosphate = D-ribulose 5-phosphate. It functions in the pathway carbohydrate degradation; pentose phosphate pathway; D-ribose 5-phosphate from D-ribulose 5-phosphate (non-oxidative stage): step 1/1. In terms of biological role, catalyzes the reversible conversion of ribose-5-phosphate to ribulose 5-phosphate. The chain is Ribose-5-phosphate isomerase A from Shouchella clausii (strain KSM-K16) (Alkalihalobacillus clausii).